Consider the following 591-residue polypeptide: Probable methyltransferase PMT6 (591 aa).

Over 1-13 (MRGSVIGAERSGQ) the chain is Cytoplasmic. Residues 14-34 (TIMVALVLMVGSFYTGSLFGT) form a helical; Signal-anchor for type II membrane protein membrane-spanning segment. The Lumenal portion of the chain corresponds to 35–591 (NQPIYVSHPS…FCRKRFWAII (557 aa)). Residues asparagine 87, asparagine 99, asparagine 146, asparagine 193, asparagine 323, asparagine 436, asparagine 473, and asparagine 515 are each glycosylated (N-linked (GlcNAc...) asparagine).

The protein belongs to the methyltransferase superfamily.

The protein resides in the endoplasmic reticulum membrane. In Arabidopsis thaliana (Mouse-ear cress), this protein is Probable methyltransferase PMT6.